The following is a 450-amino-acid chain: Probable ECA polymerase (450 aa).

11 helical membrane passes run 6–26 (FSGL…LTWF), 37–57 (VFFS…TSVL), 63–83 (VGVA…CFYA), 118–138 (VILM…NGFL), 155–175 (GVAL…VYFL), 181–201 (AWLF…MIVG), 207–227 (IIIA…ISLW), 228–248 (MLAA…LKRY), 341–361 (LVVM…GLII), 378–398 (YKAA…IVLA), and 410–430 (VFFI…YWLF).

Belongs to the WzyE family. Probably part of a complex composed of WzxE, WzyE and WzzE.

The protein resides in the cell inner membrane. Its pathway is bacterial outer membrane biogenesis; enterobacterial common antigen biosynthesis. Its function is as follows. Probably involved in the polymerization of enterobacterial common antigen (ECA) trisaccharide repeat units. The protein is Probable ECA polymerase of Escherichia coli O127:H6 (strain E2348/69 / EPEC).